A 432-amino-acid chain; its full sequence is Enolase (432 aa).

Q167 contacts (2R)-2-phosphoglycerate. The active-site Proton donor is E209. D246, E291, and D318 together coordinate Mg(2+). (2R)-2-phosphoglycerate is bound by residues K343, R372, S373, and K394. K343 (proton acceptor) is an active-site residue.

It belongs to the enolase family. Component of the RNA degradosome, a multiprotein complex involved in RNA processing and mRNA degradation. Mg(2+) serves as cofactor.

It localises to the cytoplasm. Its subcellular location is the secreted. It is found in the cell surface. It catalyses the reaction (2R)-2-phosphoglycerate = phosphoenolpyruvate + H2O. The protein operates within carbohydrate degradation; glycolysis; pyruvate from D-glyceraldehyde 3-phosphate: step 4/5. Catalyzes the reversible conversion of 2-phosphoglycerate (2-PG) into phosphoenolpyruvate (PEP). It is essential for the degradation of carbohydrates via glycolysis. The sequence is that of Enolase from Aliivibrio fischeri (strain MJ11) (Vibrio fischeri).